The following is a 65-amino-acid chain: Photosystem II reaction center protein J (65 aa).

Residues 35–55 (LWLVATAGGTAVIFVLGIFFY) form a helical membrane-spanning segment.

The protein belongs to the PsbJ family. In terms of assembly, PSII is composed of 1 copy each of membrane proteins PsbA, PsbB, PsbC, PsbD, PsbE, PsbF, PsbH, PsbI, PsbJ, PsbK, PsbL, PsbM, PsbT, PsbX, PsbY, Psb30/Ycf12, peripheral proteins PsbO, CyanoQ (PsbQ), PsbU, PsbV and a large number of cofactors. It forms dimeric complexes.

The protein resides in the cellular thylakoid membrane. Its function is as follows. One of the components of the core complex of photosystem II (PSII). PSII is a light-driven water:plastoquinone oxidoreductase that uses light energy to abstract electrons from H(2)O, generating O(2) and a proton gradient subsequently used for ATP formation. It consists of a core antenna complex that captures photons, and an electron transfer chain that converts photonic excitation into a charge separation. In Prochlorococcus marinus (strain NATL2A), this protein is Photosystem II reaction center protein J.